The chain runs to 849 residues: Coiled-coil domain-containing protein 87 (849 aa).

The stretch at 387–415 (RHPAAGHRLEELEKMLRNLQEEEASGQWD) forms a coiled coil.

It belongs to the CCDC87 family.

Plays a role in spermatogenesis, where it is important for normal sperm head morphology. Also required for the acrosome reaction and thus normal male fertility. This Homo sapiens (Human) protein is Coiled-coil domain-containing protein 87 (CCDC87).